Reading from the N-terminus, the 364-residue chain is MDAYEYGELLKTLSKKMENISNIVKPDELKKRLDEIEEMQQDPNFWNDTANAGKISQEKTRTERILETYHNANDAVYDAIEYFEMAKAEKDEETLEMLYEDAETLKERTNALEVQMMLSGEHDSNNAIVSIHPGAGGTESQDWASMLYRMYLRWAERHGFKVEVLDYQPGEEAGIKDVSFIIKGENAYGYLKVENGIHRLVRISPFDSNAKRHTSFTSVMVSPEIDDDIDIEIEDKDLRIDTYRASGAGGQHVNKTESAIRITHEPTGIVVQCQNDRSQHKNKSAAMKMLKSRLYEYEMAKKQAEIDGVEKSDIGWGHQIRSYVMQPYQQVKDTRSGQAFTNVDAILDGDIDKLLEGVLISQAK.

Residue Q251 is modified to N5-methylglutamine.

Belongs to the prokaryotic/mitochondrial release factor family. Methylated by PrmC. Methylation increases the termination efficiency of RF2.

It localises to the cytoplasm. Peptide chain release factor 2 directs the termination of translation in response to the peptide chain termination codons UGA and UAA. This chain is Peptide chain release factor 2, found in Sulfurovum sp. (strain NBC37-1).